The chain runs to 640 residues: Large subunit GTPase 1 homolog (640 aa).

One can recognise a CP-type G domain in the interval 165 to 426; it reads WRQLWRVIER…LCDCPGLVMP (262 aa). 213–216 lines the GTP pocket; that stretch reads NKAD. The interval 251-341 is disordered; sequence AEERGEDAMD…ESTATSSFYN (91 aa). Composition is skewed to acidic residues over residues 253–270, 290–304, and 320–331; these read ERGEDAMDQEDQSDTEEE, EKDENEQDEEEEGED, and ESGDEDHAEENP. The span at 332–341 shows a compositional bias: polar residues; sequence ESTATSSFYN. Residues 375–382 and 419–422 contribute to the GTP site; these read GYPNVGKS and DCPG. The tract at residues 602 to 640 is disordered; sequence GPVEAGKANTEQQAGKPWKKHGNRNKKEKVRRLNKHLDA. Basic residues predominate over residues 618-640; that stretch reads PWKKHGNRNKKEKVRRLNKHLDA.

It belongs to the TRAFAC class YlqF/YawG GTPase family. LSG1 subfamily.

The protein localises to the cytoplasm. The protein resides in the endoplasmic reticulum. It localises to the nucleus. Its subcellular location is the cajal body. It carries out the reaction GTP + H2O = GDP + phosphate + H(+). Its function is as follows. Functions as a GTPase. May act by mediating the release of NMD3 from the 60S ribosomal subunit after export into the cytoplasm during the 60S ribosomal subunit maturation. This chain is Large subunit GTPase 1 homolog, found in Danio rerio (Zebrafish).